The chain runs to 733 residues: Sulfate transporter (733 aa).

Basic and acidic residues predominate over residues 1 to 18 (MSLKNEEQNDLSPKDSVK). A disordered region spans residues 1–37 (MSLKNEEQNDLSPKDSVKGNDQYRAPSGIHLEREEES). Residues S12 and S16 each carry the phosphoserine modification. Transmembrane regions (helical) follow at residues 113-133 (VMSGLIVGILLVPQSIAYSLL) and 138-158 (PIYGLYTSFFASLIYFILGTS). N194 is a glycosylation site (N-linked (GlcNAc...) asparagine). The next 6 membrane-spanning stretches (helical) occupy residues 214–234 (IIVGSTVTFVAGVYQVAMGFF), 237–257 (GFVSVYLSDALLGGFVTGASF), 379–399 (IDAIAIAIIGFAITVSLSEMF), 415–435 (AIGFCNIIPSFFHCFTTSAAL), 453–473 (VMTALVLLLVLLVIAPLFFSL), and 519–539 (LISTEIGLLTGVCFSMFCVIL). In terms of domain architecture, STAS spans 563–714 (AYKNLQAKSG…SVYEAMTFAE (152 aa)).

This sequence belongs to the SLC26A/SulP transporter (TC 2.A.53) family. N-glycosylated.

It localises to the cell membrane. The protein localises to the apical cell membrane. The catalysed reaction is oxalate(in) + sulfate(out) = oxalate(out) + sulfate(in). It catalyses the reaction sulfate(out) + 2 chloride(in) = sulfate(in) + 2 chloride(out). The enzyme catalyses oxalate(out) + 2 chloride(in) = oxalate(in) + 2 chloride(out). It carries out the reaction bromide(in) + chloride(out) = bromide(out) + chloride(in). The catalysed reaction is nitrate(in) + chloride(out) = nitrate(out) + chloride(in). It catalyses the reaction iodide(in) + chloride(out) = iodide(out) + chloride(in). Functionally, sulfate transporter which mediates sulfate uptake into chondrocytes in order to maintain adequate sulfation of proteoglycans which is needed for cartilage development. Mediates electroneutral anion exchange of sulfate ions for oxalate ions, sulfate and oxalate ions for chloride and/or hydroxyl ions and chloride ions for bromide, iodide and nitrate ions. The coupling of sulfate transport to both hydroxyl and chloride ions likely serves to ensure transport at both acidic pH when most sulfate uptake is mediated by sulfate-hydroxide exchange and alkaline pH when most sulfate uptake is mediated by sulfate-chloride exchange. Essential for chondrocyte proliferation, differentiation and cell size expansion. This is Sulfate transporter (SLC26A2) from Bubalus bubalis (Domestic water buffalo).